Reading from the N-terminus, the 327-residue chain is Cobalamin biosynthesis protein CobD (327 aa).

4 helical membrane-spanning segments follow: residues 61–78 (MWLT…GLVI), 80–102 (SILP…ILLA), 160–182 (GIVA…YKFI), and 300–322 (AALV…ASLV).

Belongs to the CobD/CbiB family.

The protein localises to the cell membrane. It participates in cofactor biosynthesis; adenosylcobalamin biosynthesis. Functionally, converts cobyric acid to cobinamide by the addition of aminopropanol on the F carboxylic group. The polypeptide is Cobalamin biosynthesis protein CobD (Brucella melitensis biotype 1 (strain ATCC 23456 / CCUG 17765 / NCTC 10094 / 16M)).